Consider the following 605-residue polypeptide: Proline--tRNA ligase (605 aa).

Belongs to the class-II aminoacyl-tRNA synthetase family. ProS type 1 subfamily. In terms of assembly, homodimer.

It is found in the cytoplasm. It catalyses the reaction tRNA(Pro) + L-proline + ATP = L-prolyl-tRNA(Pro) + AMP + diphosphate. Catalyzes the attachment of proline to tRNA(Pro) in a two-step reaction: proline is first activated by ATP to form Pro-AMP and then transferred to the acceptor end of tRNA(Pro). As ProRS can inadvertently accommodate and process non-cognate amino acids such as alanine and cysteine, to avoid such errors it has two additional distinct editing activities against alanine. One activity is designated as 'pretransfer' editing and involves the tRNA(Pro)-independent hydrolysis of activated Ala-AMP. The other activity is designated 'posttransfer' editing and involves deacylation of mischarged Ala-tRNA(Pro). The misacylated Cys-tRNA(Pro) is not edited by ProRS. In Bifidobacterium adolescentis (strain ATCC 15703 / DSM 20083 / NCTC 11814 / E194a), this protein is Proline--tRNA ligase.